Consider the following 347-residue polypeptide: MTPMTTLIMLFSLLLGTTLTLTSSHWLLMWMGLEVSTLAIIPLLTYTNHPRSIESAIKYFLTQATASMLLMFAASLNTWMTGHWTLMQIDNTISSGIMTFALAMKLGLAPFHYWVPEVLQGSSLMSGMILLTWQKLAPISIIYQISPTLNMDILLTLAISSTLLGGWNGLNQTQLRKVMAYSSIAHMGWMVLIIIYFPTLTTLNLTLYIMSTVALFTVFHTTNITKTKPLSLMWNKAPIMTLAIILLLLSLGGLPPLTGFAPKWLVIQELIKHDNMIMATVLAITALLNLFFYMRIIYSSTLTTFPTTNNNKFHWYSKSTKNPLSLPTLVILSTTLLPLTPMFITLS.

10 helical membrane passes run 1 to 21, 26 to 46, 56 to 76, 96 to 116, 153 to 171, 178 to 198, 199 to 219, 237 to 257, 277 to 297, and 326 to 346; these read MTPM…TLTL, WLLM…LLTY, AIKY…AASL, GIMT…YWVP, ILLT…NGLN, VMAY…IYFP, TLTT…FTVF, APIM…LPPL, IMAT…MRII, and LPTL…FITL.

Belongs to the complex I subunit 2 family. As to quaternary structure, core subunit of respiratory chain NADH dehydrogenase (Complex I) which is composed of 45 different subunits. Interacts with TMEM242.

The protein resides in the mitochondrion inner membrane. It carries out the reaction a ubiquinone + NADH + 5 H(+)(in) = a ubiquinol + NAD(+) + 4 H(+)(out). Functionally, core subunit of the mitochondrial membrane respiratory chain NADH dehydrogenase (Complex I) which catalyzes electron transfer from NADH through the respiratory chain, using ubiquinone as an electron acceptor. Essential for the catalytic activity and assembly of complex I. The polypeptide is NADH-ubiquinone oxidoreductase chain 2 (Ornithorhynchus anatinus (Duckbill platypus)).